The following is a 314-amino-acid chain: Methenyltetrahydromethanopterin cyclohydrolase (314 aa).

This sequence belongs to the MCH family.

The protein resides in the cytoplasm. The catalysed reaction is 5,10-methenyl-5,6,7,8-tetrahydromethanopterin + H2O = N(5)-formyl-5,6,7,8-tetrahydromethanopterin + H(+). Its pathway is one-carbon metabolism; methanogenesis from CO(2); 5,10-methenyl-5,6,7,8-tetrahydromethanopterin from CO(2): step 3/3. Catalyzes the reversible interconversion of 5-formyl-H(4)MPT to methenyl-H(4)MPT(+). In Methanoregula boonei (strain DSM 21154 / JCM 14090 / 6A8), this protein is Methenyltetrahydromethanopterin cyclohydrolase.